The chain runs to 45 residues: Thymosin beta-15A (45 aa).

2 stretches are compositionally biased toward basic and acidic residues: residues 1–27 (MSDK…EEKN) and 35–45 (IQQEKECVQTS). Residues 1 to 45 (MSDKPDLSEVEKFDRSKLKKTNTEEKNTLPSKETIQQEKECVQTS) are disordered.

This sequence belongs to the thymosin beta family. In terms of tissue distribution, neuroblastoma-specific.

The protein resides in the cytoplasm. Its subcellular location is the cytoskeleton. Plays an important role in the organization of the cytoskeleton. Binds to and sequesters actin monomers (G actin) and therefore inhibits actin polymerization. The polypeptide is Thymosin beta-15A (TMSB15A) (Homo sapiens (Human)).